A 185-amino-acid polypeptide reads, in one-letter code: Ribosome-recycling factor (185 aa).

This sequence belongs to the RRF family.

It is found in the cytoplasm. Responsible for the release of ribosomes from messenger RNA at the termination of protein biosynthesis. May increase the efficiency of translation by recycling ribosomes from one round of translation to another. This is Ribosome-recycling factor from Campylobacter hominis (strain ATCC BAA-381 / DSM 21671 / CCUG 45161 / LMG 19568 / NCTC 13146 / CH001A).